The following is a 232-amino-acid chain: Ion-translocating oxidoreductase complex subunit E (232 aa).

Helical transmembrane passes span 18-38 (GLVQ…ITNA), 39-59 (LGLG…VSLV), 69-89 (IPVF…LINA), 93-113 (GLYL…IIIG), 127-147 (AAFD…VLGA), and 182-202 (PFLL…LIAL).

Belongs to the NqrDE/RnfAE family. The complex is composed of six subunits: RnfA, RnfB, RnfC, RnfD, RnfE and RnfG.

The protein localises to the cell inner membrane. Its function is as follows. Part of a membrane-bound complex that couples electron transfer with translocation of ions across the membrane. The protein is Ion-translocating oxidoreductase complex subunit E of Shewanella baltica (strain OS185).